Here is a 263-residue protein sequence, read N- to C-terminus: Zinc finger protein STAMENLESS 1 (263 aa).

The disordered stretch occupies residues 1–51 (MNSSRRQEGSPLDLNNLPDEFGKQTVESSTTTAASSAEASRVTKKKSNGGK). A compositionally biased stretch (low complexity) spans 25 to 40 (TVESSTTTAASSAEAS). Residues 58 to 80 (YECRFCSLKFCKSQALGGHMNRH) form a C2H2-type zinc finger.

As to expression, expressed in leaf primordia, inflorescence meristem, rachis branch meristems, floral meristem and floral organ primordia.

The protein localises to the nucleus. Functionally, regulates floral organ identity and cell proliferation in the inner floral whorls. Probably specifies the identities of lodicule and stamen through positive regulation of MADS16 expression. May contribute to morphogenesis by suppressing OSH1 expression in the lateral organs. This Oryza sativa subsp. japonica (Rice) protein is Zinc finger protein STAMENLESS 1 (SL1).